The following is a 220-amino-acid chain: UPF0502 protein PSPPH_2577 (220 aa).

The protein belongs to the UPF0502 family.

This Pseudomonas savastanoi pv. phaseolicola (strain 1448A / Race 6) (Pseudomonas syringae pv. phaseolicola (strain 1448A / Race 6)) protein is UPF0502 protein PSPPH_2577.